A 154-amino-acid polypeptide reads, in one-letter code: Endoribonuclease YbeY (154 aa).

3 residues coordinate Zn(2+): His116, His120, and His126.

Belongs to the endoribonuclease YbeY family. Zn(2+) is required as a cofactor.

The protein localises to the cytoplasm. In terms of biological role, single strand-specific metallo-endoribonuclease involved in late-stage 70S ribosome quality control and in maturation of the 3' terminus of the 16S rRNA. The sequence is that of Endoribonuclease YbeY from Buchnera aphidicola subsp. Baizongia pistaciae (strain Bp).